Here is a 31-residue protein sequence, read N- to C-terminus: Cytochrome b6-f complex subunit 6 (31 aa).

Residues 3–23 (TIISYFGFLLASIIFTLILFI) traverse the membrane as a helical segment.

It belongs to the PetL family. In terms of assembly, the 4 large subunits of the cytochrome b6-f complex are cytochrome b6, subunit IV (17 kDa polypeptide, PetD), cytochrome f and the Rieske protein, while the 4 small subunits are PetG, PetL, PetM and PetN. The complex functions as a dimer.

Its subcellular location is the plastid. The protein localises to the chloroplast thylakoid membrane. Its function is as follows. Component of the cytochrome b6-f complex, which mediates electron transfer between photosystem II (PSII) and photosystem I (PSI), cyclic electron flow around PSI, and state transitions. PetL is important for photoautotrophic growth as well as for electron transfer efficiency and stability of the cytochrome b6-f complex. The sequence is that of Cytochrome b6-f complex subunit 6 from Abies homolepis (Nikko fir).